Here is a 471-residue protein sequence, read N- to C-terminus: Alpha-galactosidase 6 (471 aa).

The signal sequence occupies residues methionine 1–glycine 18. Cysteine 42 and cysteine 74 are oxidised to a cystine. 2 residues coordinate substrate: aspartate 72 and aspartate 73. Asparagine 105 is a glycosylation site (N-linked (GlcNAc...) asparagine). A disulfide bond links cysteine 121 and cysteine 151. Lysine 147 is a binding site for substrate. Residue aspartate 149 is the Nucleophile of the active site. Asparagine 175 carries N-linked (GlcNAc...) asparagine glycosylation. Arginine 205 serves as a coordination point for substrate. The Proton donor role is filled by aspartate 209. 2 disulfide bridges follow: cysteine 221/cysteine 237 and cysteine 223/cysteine 230. Glutamine 251 contacts substrate. N-linked (GlcNAc...) asparagine glycans are attached at residues asparagine 270, asparagine 370, asparagine 403, asparagine 422, asparagine 435, and asparagine 454.

This sequence belongs to the glycosyl hydrolase 27 family. Homotetramer.

It is found in the secreted. It carries out the reaction Hydrolysis of terminal, non-reducing alpha-D-galactose residues in alpha-D-galactosides, including galactose oligosaccharides, galactomannans and galactolipids.. The protein is Alpha-galactosidase 6 (MEL6) of Saccharomyces cerevisiae (Baker's yeast).